We begin with the raw amino-acid sequence, 131 residues long: Holin-like protein CidA (131 aa).

4 helical membrane passes run 4–24 (VQLI…TYIG), 30–50 (IFHL…LLLQ), 65–85 (FLLK…MDVA), and 88–108 (ITLN…IVAL).

This sequence belongs to the CidA/LrgA family. CidA subfamily.

Its subcellular location is the cell membrane. Increases the activity of extracellular murein hydrolases possibly by mediating their export via hole formation. Inhibited by the antiholin-like proteins LrgAB. In an unstressed cell, the LrgAB products probably inhibit the function of the CidAB proteins. When a cell is stressed by the addition of antibiotics or by other factors in the environment, the CidAB proteins possibly oligomerize within the bacterial cell membrane, creating lesions that disrupt the proton motive force, which in turn results in loss of cell viability. These lesions are also hypothesized to regulate the subsequent cell lysis by either allowing the murein hydrolases access to the cell wall substrate and/or regulating their activity by a possible change in the cell wall pH that results from loss of membrane potential. This Staphylococcus aureus (strain Mu3 / ATCC 700698) protein is Holin-like protein CidA.